Here is a 308-residue protein sequence, read N- to C-terminus: uncharacterized protein (308 aa).

One can recognise an ABC transporter domain in the interval 5 to 236; sequence LELQQLKKTY…LKSETFILDL (232 aa). 38-45 serves as a coordination point for ATP; sequence GPNGAGKS.

The protein belongs to the ABC transporter superfamily.

This is an uncharacterized protein from Escherichia coli (strain K12).